The primary structure comprises 246 residues: Small ribosomal subunit protein uS2 (246 aa).

Residues 226–246 (QGEEEAEVAEETAPETETTTA) are disordered. A compositionally biased stretch (acidic residues) spans 229 to 239 (EEAEVAEETAP).

The protein belongs to the universal ribosomal protein uS2 family. As to quaternary structure, part of the 30S ribosomal subunit. Interacts with BrxC.

The sequence is that of Small ribosomal subunit protein uS2 (rpsB) from Bacillus subtilis (strain 168).